A 208-amino-acid chain; its full sequence is Probable GTP-binding protein EngB (208 aa).

Residues 22–195 (GLPEIALAGR…WGALEDIFVE (174 aa)) form the EngB-type G domain. GTP is bound by residues 30–37 (GRSNVGKS), 57–61 (GKTRT), 75–78 (DLPG), 142–145 (TKSD), and 174–176 (ISS). Positions 37 and 59 each coordinate Mg(2+).

Belongs to the TRAFAC class TrmE-Era-EngA-EngB-Septin-like GTPase superfamily. EngB GTPase family. It depends on Mg(2+) as a cofactor.

In terms of biological role, necessary for normal cell division and for the maintenance of normal septation. This is Probable GTP-binding protein EngB from Alkaliphilus metalliredigens (strain QYMF).